The chain runs to 499 residues: MVDRGPLLTSAIIFYLAIGAAIFEVLEEPHWKEAKKNYYTQKLHLLKEFPCLGQEGLDKILEVVSDAAGQGVAITGNQTFNNWNWPNAMIFAATVITTIGYGNVAPKTPAGRLFCVFYGLFGVPLCLTWISALGKFFGGRAKRLGQFLTKRGVSLRKAQITCTVIFIVWGVLVHLVIPPFVFMVTEGWNYIEGLYYSFITISTIGFGDFVAGVNPSANYHALYRYFVELWIYLGLAWLSLFVNWKVSMFVEVHKAIKKRRRRRKESFESSPHSRKALQVKGSTASKDVNIFSFLSKKEETYNDLIKQIGKKAMKTSGGGETGPGPGLGPQGGGLPALPPSLVPLVVYSKNRVPTLEEVSQTLRSKGHVSRSPDEEAVARAPEDSSPAPEVFMNQLDRISEECEPWDAQDYHPLIFQDASITFVNTEAGLSDEETSKSSLEDNLAGEESPQQGAEAKAPLNMGEFPSSSESTFTSTESELSVPYEQLMNEYNKANSPKGT.

The Cytoplasmic segment spans residues methionine 1–leucine 7. Residues leucine 8 to leucine 26 traverse the membrane as a helical segment. N-linked (GlcNAc...) asparagine glycosylation occurs at asparagine 77. Residues tryptophan 85–arginine 112 constitute an intramembrane region (pore-forming). K(+)-binding residues include threonine 98, isoleucine 99, glycine 100, and tyrosine 101. The selectivity filter 1 stretch occupies residues threonine 98–asparagine 103. A helical membrane pass occupies residues leucine 113–leucine 133. Residues glycine 134–lysine 157 are Cytoplasmic-facing. Residues alanine 158–phenylalanine 180 form a helical membrane-spanning segment. An intramembrane region (pore-forming) is located at residues tyrosine 190 to proline 215. 4 residues coordinate K(+): threonine 203, isoleucine 204, glycine 205, and phenylalanine 206. The segment at threonine 203 to aspartate 208 is selectivity filter 2. Residues tryptophan 230–valine 250 form a helical membrane-spanning segment. Topologically, residues glutamate 251–proline 325 are cytoplasmic. Disordered regions lie at residues alanine 312 to proline 335, glutamine 360 to proline 388, and glycine 428 to threonine 499. Residues serine 316–leucine 334 show a composition bias toward gly residues. Over residues arginine 370–glutamate 382 the composition is skewed to basic and acidic residues. Serine 371 bears the Phosphoserine mark. The segment covering serine 466 to serine 480 has biased composition (low complexity).

This sequence belongs to the two pore domain potassium channel (TC 1.A.1.8) family. As to quaternary structure, homodimer; disulfide-linked. Heterodimer with KCNK16 and KCNK17. As to expression, abundant expression in kidney, also detected in liver, placenta and small intestine. In the kidney, expression is restricted to the distal tubules and collecting ducts. Not expressed in proximal tubules or glomeruli. Expressed in pancreas, in both endocrine (alpha, beta, gamma, delta, and epsilon) and exocrine (acinar and ductal) cells.

Its subcellular location is the membrane. The catalysed reaction is K(+)(in) = K(+)(out). With respect to regulation, the channel conductance is stimulated by extracellular alkaline pH. Inhibited by quinine, quinidine and external acidification. Its function is as follows. K(+) channel that conducts voltage-dependent outward rectifying currents upon membrane depolarization. Voltage sensing is coupled to K(+) electrochemical gradient in an 'ion flux gating' mode where outward but not inward ion flow opens the gate. Homo- and heterodimerizes to form functional channels with distinct regulatory and gating properties. The protein is Potassium channel subfamily K member 5 of Homo sapiens (Human).